We begin with the raw amino-acid sequence, 526 residues long: Cytochrome P450 monooxygenase milC (526 aa).

The helical transmembrane segment at 2–20 (AIHAAYIFIAATLIALYVA) threads the bilayer. Cys470 lines the heme pocket.

This sequence belongs to the cytochrome P450 family. Heme is required as a cofactor.

The protein localises to the membrane. It catalyses the reaction cordypyrone A + reduced [NADPH--hemoprotein reductase] + O2 = cordypyrone B + oxidized [NADPH--hemoprotein reductase] + H2O + H(+). It participates in secondary metabolite biosynthesis. Its function is as follows. Cytochrome P450 monooxygenase; part of the gene cluster that mediates the biosynthesis of cordypyrones A and B, 2 pyrones that show modest activities against pathogenic bacteria including methicillin-resistant Staphylococcus aureus (MRSA), Mycobacterium tuberculosis and Bacillus cereus. The HR-PKS milA catalyzes the formation of cordypyrones A via condensation of one acetate with 10 malonate units. Since milA lacks an enoyl reductase domain, the 2 beta-keto processing domains DH and KR of milA collaborate with the trans-enoyl reductase milB to catalyze the different levels of reduction. The cytochrome P450 monooxygenase milC then hydroxylates the C-22 of cordypyrones A to yield cordypyrones B. In Cordyceps militaris (strain CM01) (Caterpillar fungus), this protein is Cytochrome P450 monooxygenase milC.